A 327-amino-acid polypeptide reads, in one-letter code: Protein-L-isoaspartate O-methyltransferase (327 aa).

Disordered regions lie at residues 1-38 (MSGERAKRFPLALEDLKREPRKPEGRAAERQAAGDAAR) and 62-105 (PRAA…KSAT). Residues 14-29 (EDLKREPRKPEGRAAE) are compositionally biased toward basic and acidic residues. The segment covering 62-77 (PRAAGASGSGVPVAKP) has biased composition (low complexity). Residues 92–105 (APSSGVKNGDKSAT) are compositionally biased toward polar residues. S175 is an active-site residue.

The protein belongs to the methyltransferase superfamily. L-isoaspartyl/D-aspartyl protein methyltransferase family.

The protein localises to the cytoplasm. It catalyses the reaction [protein]-L-isoaspartate + S-adenosyl-L-methionine = [protein]-L-isoaspartate alpha-methyl ester + S-adenosyl-L-homocysteine. Its function is as follows. Catalyzes the methyl esterification of L-isoaspartyl residues in peptides and proteins that result from spontaneous decomposition of normal L-aspartyl and L-asparaginyl residues. It plays a role in the repair and/or degradation of damaged proteins. This is Protein-L-isoaspartate O-methyltransferase from Burkholderia thailandensis (strain ATCC 700388 / DSM 13276 / CCUG 48851 / CIP 106301 / E264).